A 161-amino-acid polypeptide reads, in one-letter code: Inner membrane assembly complex subunit 17 (161 aa).

The N-terminal 22 residues, 1 to 22 (MLNPRPCVPRLLSAVARCHKPY), are a transit peptide targeting the mitochondrion. The Mitochondrial matrix segment spans residues 23–84 (STSIKSLEDL…QQQQQALKKF (62 aa)). The helical transmembrane segment at 85-107 (VRPMWIFLLMSSFFYLTGHYIWW) threads the bilayer. The Mitochondrial intermembrane portion of the chain corresponds to 108-161 (KLEYDEREIELHKQVQALRQELDSAIAAKHSGKEPALSGAGAKKPKRWYLAWLW). A coiled-coil region spans residues 109-138 (LEYDEREIELHKQVQALRQELDSAIAAKHS).

It belongs to the INA17 family. As to quaternary structure, component of the inner membrane assembly (INA) complex, composed of INA17 and INA22. Interacts with a subset of F(1)F(0)-ATP synthase subunits of the F(1)-domain and the peripheral stalk.

It localises to the mitochondrion inner membrane. In terms of biological role, component of the INA complex (INAC) that promotes the biogenesis of mitochondrial F(1)F(0)-ATP synthase. INAC facilitates the assembly of the peripheral stalk and promotes the assembly of the catalytic F(1)-domain with the membrane-embedded F(0)-domain. The sequence is that of Inner membrane assembly complex subunit 17 from Lachancea thermotolerans (strain ATCC 56472 / CBS 6340 / NRRL Y-8284) (Yeast).